The following is a 407-amino-acid chain: Peptidase T (407 aa).

A Zn(2+)-binding site is contributed by H77. The active site involves D79. Residue D140 participates in Zn(2+) binding. E174 (proton acceptor) is an active-site residue. Residues E175, D197, and H379 each contribute to the Zn(2+) site.

This sequence belongs to the peptidase M20B family. Zn(2+) serves as cofactor.

The protein localises to the cytoplasm. The enzyme catalyses Release of the N-terminal residue from a tripeptide.. Its function is as follows. Cleaves the N-terminal amino acid of tripeptides. The protein is Peptidase T of Bacteroides fragilis (strain YCH46).